Consider the following 509-residue polypeptide: Erythropoietin receptor (509 aa).

The signal sequence occupies residues 1-24; it reads MYHFGATLWPGVGSLCLLLAGATW. The Extracellular portion of the chain corresponds to 25 to 251; it reads APSPNSPDAK…SLLTASDLDP (227 aa). Intrachain disulfides connect cysteine 52-cysteine 62 and cysteine 91-cysteine 107. One can recognise a Fibronectin type-III domain in the interval 148-248; that stretch reads PPAGLLARRA…EPASLLTASD (101 aa). Asparagine 184 carries an N-linked (GlcNAc...) asparagine glycan. The short motif at 234 to 238 is the WSXWS motif element; that stretch reads WSAWS. A helical transmembrane segment spans residues 252 to 274; that stretch reads LILTLSLILVLILLLLAVLALLS. Residues 275–509 are Cytoplasmic-facing; the sequence is HRRTLKQKIW…PSPPNYVTCS (235 aa). Residue lysine 282 forms a Glycyl lysine isopeptide (Lys-Gly) (interchain with G-Cter in ubiquitin) linkage. The short motif at 283–291 is the Box 1 motif element; sequence IWPGIPSPE. Tyrosine 369 and tyrosine 427 each carry phosphotyrosine; by JAK2. The ITIM motif motif lies at 453-458; that stretch reads LKYLYL. Lysine 454 is covalently cross-linked (Glycyl lysine isopeptide (Lys-Gly) (interchain with G-Cter in ubiquitin)). 6 positions are modified to phosphotyrosine; by JAK2: tyrosine 455, tyrosine 457, tyrosine 469, tyrosine 486, tyrosine 490, and tyrosine 505. The interval 467 to 509 is disordered; it reads TDYSSGGSQETQGGSSSGPYSNPYENSLVPAPEPSPPNYVTCS. Over residues 470–493 the composition is skewed to low complexity; sequence SSGGSQETQGGSSSGPYSNPYENS.

The protein belongs to the type I cytokine receptor family. Type 1 subfamily. As to quaternary structure, forms homodimers on EPO stimulation. The tyrosine-phosphorylated form interacts with several SH2 domain-containing proteins including LYN, the adapter protein SH2B2, PTPN6, PTPN11, JAK2, PI3 kinases, STAT5A/B, SOCS3, CRKL. Interacts with INPP5D/SHIP1. SH2B2 binding inhibits the JAK-STAT signaling. Interacts with RHEX; this interaction occurs in a erythropoietin (EPO)-dependent manner. Interacts with ATXN2L. On EPO stimulation, phosphorylated on C-terminal tyrosine residues by JAK2. The phosphotyrosine motifs are also recruitment sites for several SH2-containing proteins and adapter proteins which mediate cell proliferation. Phosphorylation on Tyr-455 is required for PTPN6 interaction, Tyr-427 for PTPN11. Tyr-427 is also required for SOCS3 binding, but Tyr-455/Tyr-457 motif is the preferred binding site. In terms of processing, ubiquitinated by the ECS(SOCS2) complex following ligand-binding and phosphorylation by JAK2, leading to its degradation by the proteasome. Regulation by the ECS(SOCS2) complex acts as a negative feedback loop of erythropoietin-mediated signaling pathway. Ubiquitination at Lys-282 mediates receptor internalization, whereas ubiquitination at Lys-454 promotes trafficking of activated receptors to the lysosomes for degradation. Ubiquitinated by NOSIP; appears to be either multi-monoubiquitinated or polyubiquitinated. Ubiquitination mediates proliferation and survival of EPO-dependent cells.

It localises to the cell membrane. Its function is as follows. Receptor for erythropoietin, which mediates erythropoietin-induced erythroblast proliferation and differentiation. Upon EPO stimulation, EPOR dimerizes triggering the JAK2/STAT5 signaling cascade. In some cell types, can also activate STAT1 and STAT3. May also activate the LYN tyrosine kinase. Functionally, isoform EPOR-T acts as a dominant-negative receptor of EPOR-mediated signaling. The protein is Erythropoietin receptor (EPOR) of Sus scrofa (Pig).